Here is a 565-residue protein sequence, read N- to C-terminus: Molybdenum cofactor biosynthesis protein 1 (565 aa).

Positions 3-367 (LLARHAIRLL…AVQRKKKQHA (365 aa)) are molybdenum cofactor biosynthesis protein A. Positions 64–276 (SFGRHHTYLR…LQIIRQRWPD (213 aa)) constitute a Radical SAM core domain. Arg-73 serves as a coordination point for GTP. [4Fe-4S] cluster-binding residues include Cys-80 and Cys-84. Tyr-86 serves as a coordination point for S-adenosyl-L-methionine. Cys-87 provides a ligand contact to [4Fe-4S] cluster. A GTP-binding site is contributed by Arg-123. Gly-127 is a binding site for S-adenosyl-L-methionine. A GTP-binding site is contributed by Thr-154. Ser-178 is a binding site for S-adenosyl-L-methionine. A GTP-binding site is contributed by Lys-214. Position 248 (Met-248) interacts with S-adenosyl-L-methionine. Residues Cys-311 and Cys-314 each coordinate [4Fe-4S] cluster. 316–318 (RLR) contributes to the GTP binding site. Cys-328 serves as a coordination point for [4Fe-4S] cluster. The active-site For molybdenum cofactor biosynthesis protein C activity is Asp-525.

This sequence in the C-terminal section; belongs to the MoaC family. The protein in the N-terminal section; belongs to the radical SAM superfamily. MoaA family. Isoform Mocs1a and isoform Mocs1b probably form a heterooligomer. [4Fe-4S] cluster is required as a cofactor.

The enzyme catalyses GTP + AH2 + S-adenosyl-L-methionine = (8S)-3',8-cyclo-7,8-dihydroguanosine 5'-triphosphate + 5'-deoxyadenosine + L-methionine + A + H(+). It catalyses the reaction (8S)-3',8-cyclo-7,8-dihydroguanosine 5'-triphosphate = cyclic pyranopterin phosphate + diphosphate. Its pathway is cofactor biosynthesis; molybdopterin biosynthesis. Isoform Mocs1a and isoform Mocs1b probably form a complex that catalyzes the conversion of 5'-GTP to cyclic pyranopterin monophosphate (cPMP). Mocs1a catalyzes the cyclization of GTP to (8S)-3',8-cyclo-7,8-dihydroguanosine 5'-triphosphate and Mocs1b catalyzes the subsequent conversion of (8S)-3',8-cyclo-7,8-dihydroguanosine 5'-triphosphate to cPMP. This chain is Molybdenum cofactor biosynthesis protein 1 (Mocs1), found in Drosophila melanogaster (Fruit fly).